Here is a 296-residue protein sequence, read N- to C-terminus: Cholesterol ring-cleaving hydrolase IpdA subunit (296 aa).

It belongs to the 3-oxoacid CoA-transferase subunit A family. Heterotetramer composed of 2 IpdA subunits and 2 IpdB subunits.

It catalyses the reaction (3E)-2-(2-carboxylatoethyl)-3-methyl-6-oxocyclohex-1-ene-1-carboxyl-CoA + H2O = 6-methyl-3,7-dioxodecanedioyl-CoA. It participates in steroid metabolism; cholesterol degradation. Its function is as follows. Involved in the final steps of cholesterol and steroid degradation. Opens the last steroid ring of cholesterol by catalyzing the hydrolysis of (3E)-2-(2-carboxylatoethyl)-3-methyl-6-oxocyclohex-1-ene-1-carboxyl-CoA (COCHEA-CoA) to 6-methyl-3,7-dioxodecanedioyl-CoA (MeDODA-CoA). In Rhodococcus jostii (strain RHA1), this protein is Cholesterol ring-cleaving hydrolase IpdA subunit.